The sequence spans 168 residues: Phosphopantetheine adenylyltransferase (168 aa).

Thr10 is a substrate binding site. ATP is bound by residues 10–11 (TF) and His18. Substrate is bound by residues Lys42, Leu75, and Arg89. ATP is bound by residues 90 to 92 (GVR), Glu100, and 125 to 131 (YTYVASS).

It belongs to the bacterial CoaD family. As to quaternary structure, homohexamer. It depends on Mg(2+) as a cofactor.

The protein localises to the cytoplasm. It carries out the reaction (R)-4'-phosphopantetheine + ATP + H(+) = 3'-dephospho-CoA + diphosphate. The protein operates within cofactor biosynthesis; coenzyme A biosynthesis; CoA from (R)-pantothenate: step 4/5. In terms of biological role, reversibly transfers an adenylyl group from ATP to 4'-phosphopantetheine, yielding dephospho-CoA (dPCoA) and pyrophosphate. The protein is Phosphopantetheine adenylyltransferase of Prosthecochloris aestuarii (strain DSM 271 / SK 413).